Consider the following 749-residue polypeptide: Patatin-like phospholipase domain-containing protein AN0408 (749 aa).

A compositionally biased stretch (basic and acidic residues) spans 1–11 (MEKSAAGDNID). The interval 1 to 21 (MEKSAAGDNIDKYSPSSIPDY) is disordered. Residues 92 to 112 (WPFLLFVLGWITFLSVGYALT) traverse the membrane as a helical segment. The region spanning 280–471 (LCLSGGATFA…RTDIPIKALN (192 aa)) is the PNPLA domain. Residues 311-315 (GTSGG) carry the GXSXG motif. S313 acts as the Nucleophile in catalysis. The active-site Proton acceptor is the D458. The segment at 630–659 (SIQPFPFDNGAAGADQKSNDPREERLNRNF) is disordered. The span at 646–659 (KSNDPREERLNRNF) shows a compositional bias: basic and acidic residues.

Belongs to the PLPL family.

The protein resides in the membrane. Functionally, probable lipid hydrolase. The sequence is that of Patatin-like phospholipase domain-containing protein AN0408 from Emericella nidulans (strain FGSC A4 / ATCC 38163 / CBS 112.46 / NRRL 194 / M139) (Aspergillus nidulans).